A 132-amino-acid chain; its full sequence is Small ribosomal subunit protein uS8 (132 aa).

Belongs to the universal ribosomal protein uS8 family. In terms of assembly, part of the 30S ribosomal subunit. Contacts proteins S5 and S12.

Its function is as follows. One of the primary rRNA binding proteins, it binds directly to 16S rRNA central domain where it helps coordinate assembly of the platform of the 30S subunit. In Clavibacter michiganensis subsp. michiganensis (strain NCPPB 382), this protein is Small ribosomal subunit protein uS8.